A 218-amino-acid polypeptide reads, in one-letter code: Very-long-chain (3R)-3-hydroxyacyl-CoA dehydratase hpo-8 (218 aa).

The next 5 helical transmembrane spans lie at 15–35 (ILGW…GLTW), 44–64 (FELK…IVGL), 86–106 (ILHL…LVAW), 137–157 (LFYV…FASL), and 176–196 (MGIS…PGFP). Active-site residues include Y142 and E149.

This sequence belongs to the very long-chain fatty acids dehydratase HACD family.

It is found in the membrane. It carries out the reaction a very-long-chain (3R)-3-hydroxyacyl-CoA = a very-long-chain (2E)-enoyl-CoA + H2O. It participates in lipid metabolism; fatty acid biosynthesis. Functionally, catalyzes the third of the four reactions of the long-chain fatty acids elongation cycle. This endoplasmic reticulum-bound enzymatic process, allows the addition of two carbons to the chain of long- and very long-chain fatty acids/VLCFAs per cycle. This enzyme catalyzes the dehydration of the 3-hydroxyacyl-CoA intermediate into trans-2,3-enoyl-CoA, within each cycle of fatty acid elongation. Thereby, it participates in the production of VLCFAs of different chain lengths that are involved in multiple biological processes as precursors of membrane lipids and lipid mediators. The sequence is that of Very-long-chain (3R)-3-hydroxyacyl-CoA dehydratase hpo-8 (hpo-8) from Caenorhabditis elegans.